We begin with the raw amino-acid sequence, 79 residues long: D-alanyl carrier protein (79 aa).

In terms of domain architecture, Carrier spans 1 to 77; it reads MDVKAEVIEI…KIVEGVTELR (77 aa). Position 35 is an O-(pantetheine 4'-phosphoryl)serine (Ser-35).

It belongs to the DltC family. In terms of processing, 4'-phosphopantetheine is transferred from CoA to a specific serine of apo-DCP.

It is found in the cytoplasm. It functions in the pathway cell wall biogenesis; lipoteichoic acid biosynthesis. Functionally, carrier protein involved in the D-alanylation of lipoteichoic acid (LTA). The loading of thioester-linked D-alanine onto DltC is catalyzed by D-alanine--D-alanyl carrier protein ligase DltA. The DltC-carried D-alanyl group is further transferred to cell membrane phosphatidylglycerol (PG) by forming an ester bond, probably catalyzed by DltD. D-alanylation of LTA plays an important role in modulating the properties of the cell wall in Gram-positive bacteria, influencing the net charge of the cell wall. This Streptococcus gordonii (strain Challis / ATCC 35105 / BCRC 15272 / CH1 / DL1 / V288) protein is D-alanyl carrier protein.